Consider the following 300-residue polypeptide: MLSEGYLSGLAYRNDIQWSYPSSNEQVAEEKEEEMEATAAASLSYSSVDETQVQNLYVSCKSSGKVISSVYSRESQHSRNPRITVLQTNPNPVYESPNLAAVELYRDTSRETYLVPPSCKSICKNYNDLQIAGGQVMAINSATTDFPSEGSFQYGPLLKSSEIPLSMEDSMFTQPSDLPPTPIQRYSSYWRITSIKEKNSLQMQKPISNAVLNEYLEQKLVELYKQYFMDTGFHDSSPTQILASELIMTNVDQISIQVSIEKNLEISKARDIVINRLLQYGSTEISTQSLHISQYSNVNP.

Positions 289–293 (SLHIS) match the pLxIS motif motif. Ser-293 bears the Phosphoserine mark.

Interacts (via pLxIS motif) with IRF5; leading to IRF5 activation. Interacts with SLC15A4; leading to its recruitment to endolysosome. The phosphorylated pLxIS motif constitutes an IRF5-binding motif, leading to recruitment of the transcription factor IRF5 to induce type-I interferons and other cytokines.

Its subcellular location is the lysosome membrane. It localises to the endosome membrane. It is found in the nucleus. The protein resides in the cytoplasm. In terms of biological role, innate immune adapter that mediates the recruitment and activation of IRF5 downstream of endolysosomal toll-like receptors TLR7, TLR8 and TLR9. Following recruitment to endolysosome by SLC15A4 downstream of TLR7, TLR8 and TLR9, specifically recruits IRF5 transcription factor via its pLxIS motif, leading to IRF5 activation and subsequent expression of type I interferons. Plays a role in the regulation of endolysosomal pH in immune cells such as B-cells, dendritic cells and monocytes. This is TLR adapter interacting with SLC15A4 on the lysosome from Bos taurus (Bovine).